A 394-amino-acid polypeptide reads, in one-letter code: Myb-like protein R (394 aa).

Helical transmembrane passes span 11-31 (IGAQIITTVITLFTGVFEFII) and 99-119 (FFIGAVFIHLNIIPFHHLIIF). The 53-residue stretch at 325 to 377 (GNWSLDEQKALMVEVSTLGNKSEINWFFISKQLFLKGISRNARECQRKHESIQ) folds into the Myb-like domain.

Its subcellular location is the membrane. The chain is Myb-like protein R (mybR) from Dictyostelium discoideum (Social amoeba).